Here is a 352-residue protein sequence, read N- to C-terminus: UDP-N-acetylglucosamine--N-acetylmuramyl-(pentapeptide) pyrophosphoryl-undecaprenol N-acetylglucosamine transferase 3 (352 aa).

UDP-N-acetyl-alpha-D-glucosamine-binding positions include 11-13, Arg-164, Ser-194, and Gln-289; that span reads SAG.

This sequence belongs to the glycosyltransferase 28 family. MurG subfamily.

The protein resides in the cell membrane. The catalysed reaction is di-trans,octa-cis-undecaprenyl diphospho-N-acetyl-alpha-D-muramoyl-L-alanyl-D-glutamyl-meso-2,6-diaminopimeloyl-D-alanyl-D-alanine + UDP-N-acetyl-alpha-D-glucosamine = di-trans,octa-cis-undecaprenyl diphospho-[N-acetyl-alpha-D-glucosaminyl-(1-&gt;4)]-N-acetyl-alpha-D-muramoyl-L-alanyl-D-glutamyl-meso-2,6-diaminopimeloyl-D-alanyl-D-alanine + UDP + H(+). It functions in the pathway cell wall biogenesis; peptidoglycan biosynthesis. Functionally, cell wall formation. Catalyzes the transfer of a GlcNAc subunit on undecaprenyl-pyrophosphoryl-MurNAc-pentapeptide (lipid intermediate I) to form undecaprenyl-pyrophosphoryl-MurNAc-(pentapeptide)GlcNAc (lipid intermediate II). This Bacillus thuringiensis (strain Al Hakam) protein is UDP-N-acetylglucosamine--N-acetylmuramyl-(pentapeptide) pyrophosphoryl-undecaprenol N-acetylglucosamine transferase 3.